The following is a 694-amino-acid chain: Elongation factor G (694 aa).

One can recognise a tr-type G domain in the interval Glu8–Val283. GTP contacts are provided by residues Ala17 to Thr24, Asp81 to His85, and Asn135 to Asp138.

It belongs to the TRAFAC class translation factor GTPase superfamily. Classic translation factor GTPase family. EF-G/EF-2 subfamily.

The protein resides in the cytoplasm. Functionally, catalyzes the GTP-dependent ribosomal translocation step during translation elongation. During this step, the ribosome changes from the pre-translocational (PRE) to the post-translocational (POST) state as the newly formed A-site-bound peptidyl-tRNA and P-site-bound deacylated tRNA move to the P and E sites, respectively. Catalyzes the coordinated movement of the two tRNA molecules, the mRNA and conformational changes in the ribosome. This is Elongation factor G from Paramagnetospirillum magneticum (strain ATCC 700264 / AMB-1) (Magnetospirillum magneticum).